The primary structure comprises 328 residues: Leucine carboxyl methyltransferase 1 (328 aa).

S-adenosyl-L-methionine is bound by residues arginine 81, glycine 105, aspartate 128, 175–177, and glutamate 201; that span reads DLN.

This sequence belongs to the methyltransferase superfamily. LCMT family.

It catalyses the reaction [phosphatase 2A protein]-C-terminal L-leucine + S-adenosyl-L-methionine = [phosphatase 2A protein]-C-terminal L-leucine methyl ester + S-adenosyl-L-homocysteine. Its activity is regulated as follows. Inhibited by S-adenosyl-L-homocysteine. In terms of biological role, methylates the carboxyl group of the C-terminal leucine residue of protein phosphatase 2A catalytic subunits to form alpha-leucine ester residues. Acts on the two major protein phosphatase 2A catalytic subunits, PPH21 and PPH22. This is Leucine carboxyl methyltransferase 1 (PPM1) from Saccharomyces cerevisiae (strain ATCC 204508 / S288c) (Baker's yeast).